The primary structure comprises 174 residues: Large ribosomal subunit protein uL10 (174 aa).

This sequence belongs to the universal ribosomal protein uL10 family. Part of the ribosomal stalk of the 50S ribosomal subunit. The N-terminus interacts with L11 and the large rRNA to form the base of the stalk. The C-terminus forms an elongated spine to which L12 dimers bind in a sequential fashion forming a multimeric L10(L12)X complex.

Its function is as follows. Forms part of the ribosomal stalk, playing a central role in the interaction of the ribosome with GTP-bound translation factors. The sequence is that of Large ribosomal subunit protein uL10 from Acidiphilium cryptum (strain JF-5).